A 65-amino-acid polypeptide reads, in one-letter code: MINPSFKKLSEINNSRYALCVMVSKRARMLIDGKETKLKKAKAQPVTTALEEVMEKKVWEDKSNE.

This sequence belongs to the RNA polymerase subunit omega family. In terms of assembly, the RNAP catalytic core consists of 2 alpha, 1 beta, 1 beta' and 1 omega subunit. When a sigma factor is associated with the core the holoenzyme is formed, which can initiate transcription.

It catalyses the reaction RNA(n) + a ribonucleoside 5'-triphosphate = RNA(n+1) + diphosphate. Functionally, promotes RNA polymerase assembly. Latches the N- and C-terminal regions of the beta' subunit thereby facilitating its interaction with the beta and alpha subunits. The sequence is that of DNA-directed RNA polymerase subunit omega from Finegoldia magna (strain ATCC 29328 / DSM 20472 / WAL 2508) (Peptostreptococcus magnus).